Here is a 1733-residue protein sequence, read N- to C-terminus: Desertorin synthase (1733 aa).

The interval 21–358 (RIRQQSRSSR…HAPTRDLTEW (338 aa)) is N-terminal acylcarrier protein transacylase domain (SAT). The region spanning 372 to 799 (DCRIAVVGMS…GGNTALLLEE (428 aa)) is the Ketosynthase family 3 (KS3) domain. The span at 406 to 422 (HVPPDRYDVQSHTDPTG) shows a compositional bias: basic and acidic residues. The disordered stretch occupies residues 406–429 (HVPPDRYDVQSHTDPTGRRMNTSQ). Catalysis depends on for beta-ketoacyl synthase activity residues cysteine 544, histidine 679, and histidine 718. The tract at residues 903–1211 (FVFSGQGSFY…DNWHTLAGSM (309 aa)) is malonyl-CoA:ACP transacylase (MAT) domain. Positions 1288–1420 (HRIVEETFWA…GTVSVGNAAS (133 aa)) are N-terminal hotdog fold. The region spanning 1288 to 1598 (HRIVEETFWA…LRPLPRILMH (311 aa)) is the PKS/mFAS DH domain. The segment at 1299 to 1594 (GGRVVMESNV…AGVTLRPLPR (296 aa)) is product template (PT) domain. The Proton acceptor; for dehydratase activity role is filled by histidine 1320. The C-terminal hotdog fold stretch occupies residues 1448-1598 (ADRLTRDTVY…LRPLPRILMH (151 aa)). Catalysis depends on aspartate 1506, which acts as the Proton donor; for dehydratase activity. A disordered region spans residues 1608-1659 (HNWGNSPAKPEAKPEMVPTSGSSSAAGSPSGSSAGPLSIPERLADPSETSFQ). Residues 1627–1643 (SGSSSAAGSPSGSSAGP) are compositionally biased toward low complexity. A Carrier domain is found at 1659–1733 (QSKASKVSKA…TVGEVKRQML (75 aa)). The residue at position 1696 (serine 1696) is an O-(pantetheine 4'-phosphoryl)serine.

It depends on pantetheine 4'-phosphate as a cofactor.

Its pathway is secondary metabolite biosynthesis. Functionally, non-reducing polyketide synthase; part of the gene cluster that mediates the biosynthesis of the bicoumarin desertorin. The non-reducing polyketide synthase desS first catalyzes the formation of the pentaketidic 4,7-dihydroxy-5-methylcoumarin from acetyl coenzyme A and 4 malonyl coenzyme A molecules. Further O-methylation by desB leads to the formation of 7-demethylsiderin. Then, an oxidative phenol coupling catalyzed by the cytochrome P450 monooxygenase desC forms the 6,8'-dimer M-desertorin A via dimerization the monomeric precursor, 7-demethylsiderin. M-desertorin A is further converted to M-desertorin C. The sequence is that of Desertorin synthase from Aspergillus desertorum (Emericella desertorum).